The following is a 492-amino-acid chain: MANDQDPNKSLINDALTRSMSEFYDDDDDNDSDMCRANDEGEDVFDLPLKVGVSQSRNFSEVNDVLDPLSSLHGPSKKVRFEQQKQQQQHQQLHNDFNTDFNLKSPSSKKMGVEQLIQSANEINDYLANNIDKVNSFNSELLSGSGKLPGRVKSDTATQGTGRLDSMSNFALSDTELDNDDDNYLLDPLANASSTTPTVEHHGYSLLDKALSTSDKEKIYTNKVNSNSQIDTDNHSHESGNTTNNETDENESSEILDYTKFDSFPYPPSSAPNGEPPDLKVLSIECEQENEKELRRISLLLDHYESIPKIPELSDDEALSKFRENIELILQLSKKINDNANTLAISSEDPQKFVNFVMKNPPSLSFRDFIDRIQNKCMFGAVVYLGATYLLQLVFLTRDEMDGPIKLKAKLQEDQAHRIIISTIRIATKLLEDFVHSQNYICKVFGISKRLLTKLEISFMASVNFDGLMITCEKLEKTLHILDDTRQALGNT.

Disordered stretches follow at residues 1–32 (MAND…DNDS), 143–163 (SGSG…GTGR), and 223–252 (KVNS…ENES). The segment covering 8–20 (NKSLINDALTRSM) has biased composition (polar residues). Over residues 23–32 (FYDDDDDNDS) the composition is skewed to acidic residues. S32 is subject to Phosphoserine.

It belongs to the cyclin family. PHO80 subfamily. As to quaternary structure, forms a cyclin-CDK complex with PHO85.

The protein localises to the cytoplasm. The protein resides in the nucleus. Its function is as follows. Cyclin partner of the cyclin-dependent kinase (CDK) PHO85. Together with cyclin PCL10, negatively controls glycogen accumulation under favorable growth conditions. Involved in phosphorylation and negative regulation of glycogen synthase GSY2. Also has minor GLC8 kinase activity. This is PHO85 cyclin-8 (PCL8) from Saccharomyces cerevisiae (strain ATCC 204508 / S288c) (Baker's yeast).